A 152-amino-acid polypeptide reads, in one-letter code: Interleukin-3 (152 aa).

An N-terminal signal peptide occupies residues methionine 1–glutamine 19. Residues asparagine 34 and asparagine 89 are each glycosylated (N-linked (GlcNAc...) asparagine). Cysteine 35 and cysteine 103 are joined by a disulfide.

The protein belongs to the IL-3 family. Monomer. In terms of tissue distribution, activated T-cells, mast cells, natural killer cells.

It is found in the secreted. Granulocyte/macrophage colony-stimulating factors are cytokines that act in hematopoiesis by controlling the production, differentiation, and function of 2 related white cell populations of the blood, the granulocytes and the monocytes-macrophages. Its function is as follows. This CSF induces granulocytes, macrophages, mast cells, stem cells, erythroid cells, eosinophils and megakaryocytes. The protein is Interleukin-3 (IL3) of Hylobates lar (Lar gibbon).